We begin with the raw amino-acid sequence, 445 residues long: Na(+)-translocating NADH-quinone reductase subunit A (445 aa).

Belongs to the NqrA family. In terms of assembly, composed of six subunits; NqrA, NqrB, NqrC, NqrD, NqrE and NqrF.

The catalysed reaction is a ubiquinone + n Na(+)(in) + NADH + H(+) = a ubiquinol + n Na(+)(out) + NAD(+). Its function is as follows. NQR complex catalyzes the reduction of ubiquinone-1 to ubiquinol by two successive reactions, coupled with the transport of Na(+) ions from the cytoplasm to the periplasm. NqrA to NqrE are probably involved in the second step, the conversion of ubisemiquinone to ubiquinol. This Pseudomonas aeruginosa (strain UCBPP-PA14) protein is Na(+)-translocating NADH-quinone reductase subunit A.